Consider the following 256-residue polypeptide: Small ribosomal subunit protein eS1 (256 aa).

Alanine 2 is subject to N-acetylalanine; partial.

It belongs to the eukaryotic ribosomal protein eS1 family. In terms of assembly, component of the small ribosomal subunit. Mature ribosomes consist of a small (40S) and a large (60S) subunit. The 40S subunit contains about 33 different proteins and 1 molecule of RNA (18S). The 60S subunit contains about 49 different proteins and 3 molecules of RNA (25S, 5.8S and 5S).

It is found in the cytoplasm. This chain is Small ribosomal subunit protein eS1, found in Lachancea thermotolerans (strain ATCC 56472 / CBS 6340 / NRRL Y-8284) (Yeast).